Consider the following 593-residue polypeptide: Methylenetetrahydrofolate reductase (NADH) 1 (593 aa).

E21 acts as the Proton donor/acceptor in catalysis. Residues 21–26 (EYFPPK) and 52–53 (TW) contribute to the NAD(+) site. FAD-binding positions include 52-53 (TW), H81, 111-113 (RGD), Y153, 157-160 (HPDA), D175, and K182. Residue D113 participates in substrate binding. Substrate contacts are provided by Q193 and Y285.

This sequence belongs to the methylenetetrahydrofolate reductase family. In terms of assembly, homodimer. FAD is required as a cofactor.

It catalyses the reaction (6S)-5-methyl-5,6,7,8-tetrahydrofolate + NAD(+) = (6R)-5,10-methylene-5,6,7,8-tetrahydrofolate + NADH + H(+). The protein operates within one-carbon metabolism; tetrahydrofolate interconversion. Its activity is regulated as follows. Plant MTHFRs strongly prefer NADH over NADPH. Not inhibited by methionine or S-adenosylmethionine. Functionally, the probable reversibility of the MTHFR reaction in plants suggests that they can metabolize the methyl group of 5,10-methylenetetrahydrofolate to serine, sugars and starch. The sequence is that of Methylenetetrahydrofolate reductase (NADH) 1 from Zea mays (Maize).